The primary structure comprises 60 residues: Large ribosomal subunit protein uL29 (60 aa).

Belongs to the universal ribosomal protein uL29 family.

This chain is Large ribosomal subunit protein uL29, found in Fusobacterium nucleatum subsp. nucleatum (strain ATCC 25586 / DSM 15643 / BCRC 10681 / CIP 101130 / JCM 8532 / KCTC 2640 / LMG 13131 / VPI 4355).